The chain runs to 199 residues: NAD(P)H dehydrogenase (quinone) (199 aa).

One can recognise a Flavodoxin-like domain in the interval 4–190 (VLVLYYSAYG…DGARYQGRKI (187 aa)). Residues 10–15 (SAYGHI) and 78–80 (TRF) contribute to the FMN site. Tyrosine 12 contributes to the NAD(+) binding site. Tryptophan 98 provides a ligand contact to substrate. Residues 113–119 (STATQHG) and histidine 134 each bind FMN.

This sequence belongs to the WrbA family. FMN serves as cofactor.

The catalysed reaction is a quinone + NADH + H(+) = a quinol + NAD(+). It carries out the reaction a quinone + NADPH + H(+) = a quinol + NADP(+). This chain is NAD(P)H dehydrogenase (quinone), found in Xanthobacter autotrophicus (strain ATCC BAA-1158 / Py2).